The chain runs to 801 residues: Phosphatidylinositol 4-phosphate 5-kinase 1 (801 aa).

Positions 1–21 (MPGLHVVSFLVVLLLQLRSSG) are cleaved as a signal peptide. 8 MORN repeats span residues 41–63 (YVGS…DGAL), 64–86 (YDGE…SGAS), 87–109 (YEGD…DGSV), 110–132 (YKGS…NSDT), 133–155 (YEGF…DGNV), 156–178 (YIGR…NGDT), 182–201 (NWLN…SGAC), and 202–223 (YIGT…PGSK). The region spanning 366 to 797 (GHRSYYLMLN…RFISFLEKVF (432 aa)) is the PIPK domain.

In terms of tissue distribution, expressed in young seedlings, shoot and seeds, and at lower level in roots, stem and leaf.

The enzyme catalyses a 1,2-diacyl-sn-glycero-3-phospho-(1D-myo-inositol 4-phosphate) + ATP = a 1,2-diacyl-sn-glycero-3-phospho-(1D-myo-inositol-4,5-bisphosphate) + ADP + H(+). Involved in flowering. May suppress floral initiation by modifying the expression of genes related to floral induction. In Oryza sativa subsp. japonica (Rice), this protein is Phosphatidylinositol 4-phosphate 5-kinase 1 (PIPK1).